Here is a 200-residue protein sequence, read N- to C-terminus: dITP/XTP pyrophosphatase (200 aa).

8-13 (TGNQGK) provides a ligand contact to substrate. The active-site Proton acceptor is Asp-69. Asp-69 provides a ligand contact to Mg(2+). Residues Ser-70, 154 to 157 (FGYD), Lys-177, and 182 to 183 (HR) each bind substrate.

The protein belongs to the HAM1 NTPase family. Homodimer. Mg(2+) is required as a cofactor.

The catalysed reaction is XTP + H2O = XMP + diphosphate + H(+). It carries out the reaction dITP + H2O = dIMP + diphosphate + H(+). It catalyses the reaction ITP + H2O = IMP + diphosphate + H(+). Functionally, pyrophosphatase that catalyzes the hydrolysis of nucleoside triphosphates to their monophosphate derivatives, with a high preference for the non-canonical purine nucleotides XTP (xanthosine triphosphate), dITP (deoxyinosine triphosphate) and ITP. Seems to function as a house-cleaning enzyme that removes non-canonical purine nucleotides from the nucleotide pool, thus preventing their incorporation into DNA/RNA and avoiding chromosomal lesions. The protein is dITP/XTP pyrophosphatase of Vibrio cholerae serotype O1 (strain ATCC 39315 / El Tor Inaba N16961).